Here is a 631-residue protein sequence, read N- to C-terminus: MSDLQESLEKLSINEKAPQAPADDATPSNTTTLEKESSESAAAAAGEGAGEEGEEASASLYVGELNPSVNEALLFEIFSPIGQVSSIRVCRDAVTKKSLGYAYVNFHKHADGSRAIEELNYSLVDGRPCRIMWSQRDPSLRRNGDGNIFIKNLHPAIDNKALHDTFSAFGRILSCKVATDELGQSKCFGFVHYETAEAAEAAIENVNGMLLNDREVFVGKHVSKRDRESKFEEMKANFTNVYVKNLAPEVDNAKFEEIFKPFGPVTSVHLETDQEGKSRGFGFVNFENHESALNAVKEMNDKEIDGQKLYVGRAQKKRERLDELKRLYESTRLEKLSKYQGVNLFVKNLDDSIDSEKLEEEFKPFGTITSARVMVDDAGKSKGFGFVCFSSPEEATKAITEMNQRMIQGKPLYVALAQRKDVRRSQLEQQIQARNQMRMQNAAAAAGMPGQFMSPMFYGQQPGFFPPNGRGGAQGPFPPNPQMMMPRGGQMPPPQGQWPRAGPNGQPVPVYGMPPVYGGEFNGPNGQRQQRGAYPPNRNQKGGRPQRDLAAIISTVPVDQQKRILGEELYPKIVATGKAQEPEAAGKITGMMLDLENEEILALLEDDELFENHFEDALTAFEEYKKGEQAE.

The tract at residues 1–56 (MSDLQESLEKLSINEKAPQAPADDATPSNTTTLEKESSESAAAAAGEGAGEEGEEA) is disordered. 4 consecutive RRM domains span residues 58 to 136 (ASLY…WSQR), 146 to 223 (GNIF…KHVS), 239 to 316 (TNVY…RAQK), and 342 to 419 (VNLF…LAQR). Residues 518–545 (GGEFNGPNGQRQQRGAYPPNRNQKGGRP) are disordered. The PABC domain occupies 545–626 (PQRDLAAIIS…ALTAFEEYKK (82 aa)).

The protein belongs to the polyadenylate-binding protein type-1 family.

It localises to the cytoplasm. The protein resides in the nucleus. In terms of biological role, binds the poly(A) tail of mRNA. Appears to be an important mediator of the multiple roles of the poly(A) tail in mRNA biogenesis, stability and translation. In the nucleus, involved in both mRNA cleavage and polyadenylation. Is also required for efficient mRNA export to the cytoplasm. Acts in concert with a poly(A)-specific nuclease (PAN) to affect poly(A) tail shortening, which may occur concomitantly with either nucleocytoplasmic mRNA transport or translational initiation. In the cytoplasm, stimulates translation initiation and regulates mRNA decay through translation termination-coupled poly(A) shortening, probably mediated by PAN. This chain is Polyadenylate-binding protein, cytoplasmic and nuclear (PAB1), found in Meyerozyma guilliermondii (strain ATCC 6260 / CBS 566 / DSM 6381 / JCM 1539 / NBRC 10279 / NRRL Y-324) (Yeast).